Reading from the N-terminus, the 262-residue chain is Ubiquinone biosynthesis protein COQ4, mitochondrial (262 aa).

Residues His-154, Asp-155, His-158, and Glu-170 each contribute to the Zn(2+) site. The tract at residues 243-262 is disordered; that stretch reads LGIEQPPDLRQMKKDMAKKK. The span at 252-262 shows a compositional bias: basic and acidic residues; it reads RQMKKDMAKKK.

Belongs to the COQ4 family. In terms of assembly, component of a multi-subunit COQ enzyme complex, composed of at least COQ3, COQ4, COQ5, COQ6, COQ7 and COQ9. The cofactor is Zn(2+).

It localises to the mitochondrion inner membrane. The enzyme catalyses a 4-hydroxy-3-methoxy-5-(all-trans-polyprenyl)benzoate + H(+) = a 2-methoxy-6-(all-trans-polyprenyl)phenol + CO2. Its pathway is cofactor biosynthesis; ubiquinone biosynthesis. In terms of biological role, lyase that catalyzes the C1-decarboxylation of 4-hydroxy-3-methoxy-5-(all-trans-polyprenyl)benzoic acid into 2-methoxy-6-(all-trans-polyprenyl)phenol during ubiquinone biosynthesis. In Yarrowia lipolytica (strain CLIB 122 / E 150) (Yeast), this protein is Ubiquinone biosynthesis protein COQ4, mitochondrial.